We begin with the raw amino-acid sequence, 330 residues long: Free fatty acid receptor 2 (330 aa).

The Extracellular portion of the chain corresponds to 1–12 (MLPDWKSSLILM). Residues 13–33 (AYIIIFLTGLPANLLALRAFV) form a helical membrane-spanning segment. Topologically, residues 34–41 (GRIRQPQP) are cytoplasmic. A helical transmembrane segment spans residues 42–62 (APVHILLLSLTLADLLLLLLL). The Extracellular segment spans residues 63-84 (PFKIIEAASNFRWYLPKVVCAL). Residues 85–105 (TSFGFYSSIYCSTWLLAGISI) form a helical membrane-spanning segment. The Cytoplasmic segment spans residues 106–126 (ERYLGVAFPVQYKLSRRPLYG). Residues 127 to 147 (VIAALVAWVMSFGHCTIVIIV) form a helical membrane-spanning segment. Residues 148 to 173 (QYLNTTEQVRSGNEITCYENFTDNQL) lie on the Extracellular side of the membrane. N-linked (GlcNAc...) asparagine glycosylation is found at Asn-151 and Asn-167. The helical transmembrane segment at 174-194 (DVVLPVRLELCLVLFFIPMAV) threads the bilayer. Residues 195-219 (TIFCYWRFVWIMLSQPLVGAQRRRR) are Cytoplasmic-facing. The chain crosses the membrane as a helical span at residues 220-240 (AVGLAVVTLLNFLVCFGPYNV). At 241–255 (SHLVGYHQRKSPWWR) the chain is on the extracellular side. Residues 256 to 276 (SIAVVFSSLNASLDPLLFYFS) traverse the membrane as a helical segment. Topologically, residues 277-330 (SSVVRRAFGRGLQVLRNQGSSLLGRRGKDTAEGTNEDRGVGQGEGMPSSDFTTE) are cytoplasmic. Positions 299-330 (LGRRGKDTAEGTNEDRGVGQGEGMPSSDFTTE) are disordered. Residues 302–315 (RGKDTAEGTNEDRG) are compositionally biased toward basic and acidic residues.

The protein belongs to the G-protein coupled receptor 1 family. As to quaternary structure, interacts with FCN1 (via Fibrinogen C-terminal domain). In terms of tissue distribution, expressed at relatively high levels in peripheral blood leukocytes and, to lesser extent, in spleen.

The protein resides in the cell membrane. Functionally, g protein-coupled receptor that is activated by a major product of dietary fiber digestion, the short chain fatty acids (SCFAs), and that plays a role in the regulation of whole-body energy homeostasis and in intestinal immunity. In omnivorous mammals, the short chain fatty acids acetate, propionate and butyrate are produced primarily by the gut microbiome that metabolizes dietary fibers. SCFAs serve as a source of energy but also act as signaling molecules. That G protein-coupled receptor is probably coupled to the pertussis toxin-sensitive, G(i/o)-alpha family of G proteins but also to the Gq family. Its activation results in the formation of inositol 1,4,5-trisphosphate, the mobilization of intracellular calcium, the phosphorylation of the MAPK3/ERK1 and MAPK1/ERK2 kinases and the inhibition of intracellular cAMP accumulation. May play a role in glucose homeostasis by regulating the secretion of GLP-1, in response to short-chain fatty acids accumulating in the intestine. May also regulate the production of LEP/Leptin, a hormone acting on the central nervous system to inhibit food intake. Finally, may also regulate whole-body energy homeostasis through adipogenesis regulating both differentiation and lipid storage of adipocytes. In parallel to its role in energy homeostasis, may also mediate the activation of the inflammatory and immune responses by SCFA in the intestine, regulating the rapid production of chemokines and cytokines. May also play a role in the resolution of the inflammatory response and control chemotaxis in neutrophils. In addition to SCFAs, may also be activated by the extracellular lectin FCN1 in a process leading to activation of monocytes and inducing the secretion of interleukin-8/IL-8 in response to the presence of microbes. Among SCFAs, the fatty acids containing less than 6 carbons, the most potent activators are probably acetate, propionate and butyrate. Exhibits a SCFA-independent constitutive G protein-coupled receptor activity. The protein is Free fatty acid receptor 2 (FFAR2) of Homo sapiens (Human).